Reading from the N-terminus, the 352-residue chain is Cysteinyl leukotriene receptor 1 (352 aa).

The Extracellular segment spans residues 1 to 43 (MYLQGTKQTFLENMNGTENLTTSLINNTCHDTIDEFRNQVYST). N-linked (GlcNAc...) asparagine glycans are attached at residues Asn15, Asn19, and Asn26. The helical transmembrane segment at 44-64 (MYSVISVVGFFGNSFVLYVLI) threads the bilayer. The Cytoplasmic portion of the chain corresponds to 65-72 (KTYHEKSA). A helical membrane pass occupies residues 73-93 (FQVYMINLAIADLLCVCTLPL). The Extracellular portion of the chain corresponds to 94-121 (RVVYYVHKGKWLFGDFLCRLTTYALYVN). The cysteines at positions 111 and 188 are disulfide-linked. The helical transmembrane segment at 122 to 142 (LYCSIFFMTAMSFFRCVAIVF) threads the bilayer. Topologically, residues 143–156 (PVQNINLVTQKKAR) are cytoplasmic. A helical membrane pass occupies residues 157-177 (FVCIGIWIFVILTSSPFLMYK). Topologically, residues 178–208 (SYQDEKNNTKCFEPPQNNQAKKYVLILHYVS) are extracellular. Asn184 carries N-linked (GlcNAc...) asparagine glycosylation. Residues 209 to 229 (LFFGFIIPFVTIIVCYTMIIL) form a helical membrane-spanning segment. Over 230–245 (TLLKNTMKKNMPSRRK) the chain is Cytoplasmic. Residues 246 to 266 (AIGMIIVVTAAFLVSFMPYHI) traverse the membrane as a helical segment. At 267 to 291 (QRTIHLHLLHSETRPCDSVLRMQKS) the chain is on the extracellular side. Residues 292–312 (VVITLSLAASNCCFDPLLYFF) form a helical membrane-spanning segment. The Cytoplasmic segment spans residues 313–352 (SGGNFRRRLSTFRKHSLSSMTYVPKKKASLPEKGEEICNE).

The protein belongs to the G-protein coupled receptor 1 family. Widely expressed, with higher expression in the lung and skin, intermediate levels in the heart, kidney and stomach and lower levels in several other tissues. Isoform 1 is the most abundant form in all tested tissues.

It localises to the cell membrane. Functionally, receptor for cysteinyl leukotrienes mediating constriction of the microvascular smooth muscle during an inflammatory response. This response is mediated via a G-protein that activates a phosphatidylinositol-calcium second messenger system. The rank order of affinities for the leukotrienes is LTD4 &gt;&gt; LTE4 = LTC4 &gt;&gt; LTB4. This is Cysteinyl leukotriene receptor 1 (Cysltr1) from Mus musculus (Mouse).